The primary structure comprises 156 residues: ATP synthase subunit b (156 aa).

The helical transmembrane segment at 7–26 threads the bilayer; sequence LIGQAIWFALFIWITMKYVW.

This sequence belongs to the ATPase B chain family. In terms of assembly, F-type ATPases have 2 components, F(1) - the catalytic core - and F(0) - the membrane proton channel. F(1) has five subunits: alpha(3), beta(3), gamma(1), delta(1), epsilon(1). F(0) has three main subunits: a(1), b(2) and c(10-14). The alpha and beta chains form an alternating ring which encloses part of the gamma chain. F(1) is attached to F(0) by a central stalk formed by the gamma and epsilon chains, while a peripheral stalk is formed by the delta and b chains.

The protein resides in the cell inner membrane. In terms of biological role, f(1)F(0) ATP synthase produces ATP from ADP in the presence of a proton or sodium gradient. F-type ATPases consist of two structural domains, F(1) containing the extramembraneous catalytic core and F(0) containing the membrane proton channel, linked together by a central stalk and a peripheral stalk. During catalysis, ATP synthesis in the catalytic domain of F(1) is coupled via a rotary mechanism of the central stalk subunits to proton translocation. Functionally, component of the F(0) channel, it forms part of the peripheral stalk, linking F(1) to F(0). This is ATP synthase subunit b from Dechloromonas aromatica (strain RCB).